Here is a 152-residue protein sequence, read N- to C-terminus: Cell division protein SepF (152 aa).

The protein belongs to the SepF family. Homodimer. Interacts with FtsZ.

Its subcellular location is the cytoplasm. Cell division protein that is part of the divisome complex and is recruited early to the Z-ring. Probably stimulates Z-ring formation, perhaps through the cross-linking of FtsZ protofilaments. Its function overlaps with FtsA. The polypeptide is Cell division protein SepF (Listeria monocytogenes serotype 4b (strain CLIP80459)).